Reading from the N-terminus, the 136-residue chain is MAGAGSAAVSGAGTPVAGPTGRDLFAEGLLEFLRPAVQQLDSHVHAVRESQVELREQIDNLATELCRINEDQKVALDLDPYVKKLLNARRRVVLVNNILQNAQERLRRLNHSVAKETARRRAMLDSGIYPPGSPGK.

Ala2 carries the post-translational modification N-acetylalanine. Ser10 is modified (phosphoserine). Position 14 is a phosphothreonine (Thr14). Positions 37 to 126 form a coiled coil; it reads VQQLDSHVHA…TARRRAMLDS (90 aa). The residue at position 50 (Ser50) is a Phosphoserine; by PKA. Residues 83–136 form an interaction with TOR1A region; it reads KKLLNARRRVVLVNNILQNAQERLRRLNHSVAKETARRRAMLDSGIYPPGSPGK. Ser126 bears the Phosphoserine mark. Tyr129 carries the phosphotyrosine modification. Ser133 is modified (phosphoserine).

This sequence belongs to the SNAPIN family. As to quaternary structure, component of the biogenesis of lysosome-related organelles complex 1 (BLOC-1) composed of BLOC1S1, BLOC1S2, BLOC1S3, BLOC1S4, BLOC1S5, BLOC1S6, DTNBP1/BLOC1S7 and SNAPIN/BLOC1S8. Octamer composed of one copy each BLOC1S1, BLOC1S2, BLOC1S3, BLOC1S4, BLOC1S5, BLOC1S6, DTNBP1/BLOC1S7 and SNAPIN/BLOC1S8. The BLOC-1 complex associates with the AP-3 protein complex and membrane protein cargos. Component of the BLOC-one-related complex (BORC) which is composed of BLOC1S1, BLOC1S2, BORCS5, BORCS6, BORCS7, BORCS8, KXD1 and SNAPIN. Associates with the SNARE complex. Interacts with CSNK1D, SNAP23 and STX4A but not with STX1A, VAMP2 and SYT1. Interacts with SNAP25; the interaction with SNAP25 is increased by its phosphorylation. Interacts with CNTRL, NANOS1, PUM2 and RGS7. Interacts with TOR1A; the interaction is direct and associates SNAPIN with the CSN complex. (Microbial infection) Interacts with human cytomegalovirus/HHV-5 protein UL70. In terms of processing, phosphorylated by CSNK1D/CK1. Phosphorylated by PKD, phosphorylation controls SNAPIN protein stability. As to expression, expressed in male germ cells of adult testis (at protein level).

It localises to the membrane. The protein resides in the cytoplasm. It is found in the cytosol. Its subcellular location is the perinuclear region. The protein localises to the golgi apparatus membrane. It localises to the lysosome membrane. The protein resides in the cytoplasmic vesicle. It is found in the secretory vesicle. Its subcellular location is the synaptic vesicle membrane. Functionally, component of the BLOC-1 complex, a complex that is required for normal biogenesis of lysosome-related organelles (LRO), such as platelet dense granules and melanosomes. In concert with the AP-3 complex, the BLOC-1 complex is required to target membrane protein cargos into vesicles assembled at cell bodies for delivery into neurites and nerve terminals. The BLOC-1 complex, in association with SNARE proteins, is also proposed to be involved in neurite extension. Plays a role in intracellular vesicle trafficking and synaptic vesicle recycling. May modulate a step between vesicle priming, fusion and calcium-dependent neurotransmitter release through its ability to potentiate the interaction of synaptotagmin with the SNAREs and the plasma-membrane-associated protein SNAP25. Its phosphorylation state influences exocytotic protein interactions and may regulate synaptic vesicle exocytosis. May also have a role in the mechanisms of SNARE-mediated membrane fusion in non-neuronal cells. As part of the BORC complex may play a role in lysosomes movement and localization at the cell periphery. Associated with the cytosolic face of lysosomes, the BORC complex may recruit ARL8B and couple lysosomes to microtubule plus-end-directed kinesin motor. The protein is SNARE-associated protein Snapin (SNAPIN) of Homo sapiens (Human).